The chain runs to 569 residues: MLO-like protein 10 (569 aa).

Residues 1 to 41 (MATRCFWCWTTLLFCSQLLTGFARASSAGGAKEKGLSQTPT) are Extracellular-facing. A helical transmembrane segment spans residues 42 to 62 (WAVALVCTFFILVSVLLEKAL). At 63 to 85 (HRVATWLWEKHKNSLLEALEKIK) the chain is on the cytoplasmic side. The helical transmembrane segment at 86-106 (AELMILGFISLLLTFGEQYIL) threads the bilayer. At 107 to 163 (KICIPEKAAASMLPCPAPSTHDQDKTHRRRLAAATTSSRCDEGHEPLIPATGLHQLH) the chain is on the extracellular side. A helical membrane pass occupies residues 164 to 184 (ILLFFMAAFHILYSFITMMLG). At 185–286 (RLKIRGWKKW…IKRSLEDDFK (102 aa)) the chain is on the cytoplasmic side. The chain crosses the membrane as a helical span at residues 287-307 (VVVGISPLLWASFVIFLLLNV). Position 308 (Asn-308) is a topological domain, extracellular. A helical transmembrane segment spans residues 309-329 (GWEALFWASILPVLIILAVST). The Cytoplasmic portion of the chain corresponds to 330-372 (KLQAILTRMALGITERHAVVQGIPLVHGSDKYFWFNRPQLLLH). A helical transmembrane segment spans residues 373–393 (LLHFALFQNAFQLTYFFWVWY). Topologically, residues 394–413 (SFGLKSCFHTDFKLVIVKLS) are extracellular. Residues 414–434 (LGVGALILCSYITLPLYALVT) form a helical membrane-spanning segment. The Cytoplasmic segment spans residues 435-569 (QMGSNMKKAV…VKNVPANDID (135 aa)). The segment at 447–468 (EQMAKALKKWHMTVKKKKGKAR) is calmodulin-binding.

Belongs to the MLO family.

It is found in the membrane. May be involved in modulation of pathogen defense and leaf cell death. Activity seems to be regulated by Ca(2+)-dependent calmodulin binding and seems not to require heterotrimeric G proteins. In Arabidopsis thaliana (Mouse-ear cress), this protein is MLO-like protein 10 (MLO10).